The sequence spans 395 residues: Ketoisovalerate oxidoreductase subunit VorA (395 aa).

As to quaternary structure, heterotetramer of one alpha, one beta, one delta and one gamma chain.

It catalyses the reaction 3-methyl-2-oxobutanoate + 2 oxidized [2Fe-2S]-[ferredoxin] + CoA = 2-methylpropanoyl-CoA + 2 reduced [2Fe-2S]-[ferredoxin] + CO2 + H(+). This Pyrococcus abyssi (strain GE5 / Orsay) protein is Ketoisovalerate oxidoreductase subunit VorA (vorA).